The sequence spans 112 residues: Large ribosomal subunit protein uL22 (112 aa).

Belongs to the universal ribosomal protein uL22 family. As to quaternary structure, part of the 50S ribosomal subunit.

This protein binds specifically to 23S rRNA; its binding is stimulated by other ribosomal proteins, e.g. L4, L17, and L20. It is important during the early stages of 50S assembly. It makes multiple contacts with different domains of the 23S rRNA in the assembled 50S subunit and ribosome. Its function is as follows. The globular domain of the protein is located near the polypeptide exit tunnel on the outside of the subunit, while an extended beta-hairpin is found that lines the wall of the exit tunnel in the center of the 70S ribosome. The polypeptide is Large ribosomal subunit protein uL22 (Lawsonia intracellularis (strain PHE/MN1-00)).